The chain runs to 2485 residues: Probable polyketide synthase 10 (2485 aa).

One can recognise a Ketosynthase family 3 (KS3) domain in the interval 8 to 447 (EDDIAIIGVG…GANCCIILSE (440 aa)). Active-site for beta-ketoacyl synthase activity residues include cysteine 184, histidine 325, and histidine 363. The interval 636-669 (GIEASFIVGHSLGEISAAHCSGMIDLETLCYIIY) is acyl/malonyl transferase. Serine 646 (for acyl/malonyl transferase activity) is an active-site residue. The tract at residues 930–1054 (PPITILGNES…GNFHISNNLF (125 aa)) is N-terminal hotdog fold. A PKS/mFAS DH domain is found at 930 to 1220 (PPITILGNES…SKSLTPIQDP (291 aa)). The active-site Proton acceptor; for dehydratase activity is histidine 964. The interval 1071 to 1220 (NYSLIERDDL…SKSLTPIQDP (150 aa)) is C-terminal hotdog fold. Aspartate 1134 serves as the catalytic Proton donor; for dehydratase activity. Residues 2410-2485 (ESNKGIDGLL…NQLIKFLNKK (76 aa)) enclose the Carrier domain. Serine 2447 carries the O-(pantetheine 4'-phosphoryl)serine modification.

Requires pantetheine 4'-phosphate as cofactor.

Functionally, probable polyketide synthase. The polypeptide is Probable polyketide synthase 10 (pks10) (Dictyostelium discoideum (Social amoeba)).